The primary structure comprises 53 residues: Zinc metalloproteinase-disintegrin-like alborhagin (53 aa).

The protein belongs to the venom metalloproteinase (M12B) family. P-III subfamily. P-IIIb sub-subfamily. Monomer. The cofactor is Zn(2+). In terms of processing, contains numerous disulfide bonds. Glycosylated. In terms of tissue distribution, expressed by the venom gland.

It is found in the secreted. With respect to regulation, alborhagin-induced platelet aggregation, but not shape change, is inhibited by EDTA, suggesting that the platelet activation (shape change) is independent of divalent cation or metalloproteinase activity. Functionally, induces platelet activation and glycoprotein VI (GP6)-dependent platelet aggregation. Induces ectodomain cleavage of GP6 by activating endogenous platelet metalloproteinases (probably ADAM10). Has fibrinogenolytic activity against the alpha chain of fibrinogen (FGA). Recognizes distinct binding sites as convulxin, since alborhagin has minimal effect on convulxin binding to GPVI-expressing cells. In terms of biological role, disintegrin alborhagin-C: 42 kDa fragment of alborhagin autoproteolysed that does not show platelet activation. The protein is Zinc metalloproteinase-disintegrin-like alborhagin of Trimeresurus albolabris (White-lipped pit viper).